The chain runs to 494 residues: UPF0371 protein stu1377 (494 aa).

This sequence belongs to the UPF0371 family.

The chain is UPF0371 protein stu1377 from Streptococcus thermophilus (strain ATCC BAA-250 / LMG 18311).